A 493-amino-acid chain; its full sequence is Ribulose bisphosphate carboxylase large chain (493 aa).

2 residues coordinate substrate: N132 and T182. K184 acts as the Proton acceptor in catalysis. K186 contacts substrate. 3 residues coordinate Mg(2+): K210, D212, and E213. K210 carries the post-translational modification N6-carboxylysine. The active-site Proton acceptor is H302. Residues R303, H335, and S387 each coordinate substrate.

It belongs to the RuBisCO large chain family. Type I subfamily. In terms of assembly, heterohexadecamer of 8 large chains and 8 small chains. It depends on Mg(2+) as a cofactor.

It carries out the reaction 2 (2R)-3-phosphoglycerate + 2 H(+) = D-ribulose 1,5-bisphosphate + CO2 + H2O. The catalysed reaction is D-ribulose 1,5-bisphosphate + O2 = 2-phosphoglycolate + (2R)-3-phosphoglycerate + 2 H(+). In terms of biological role, ruBisCO catalyzes two reactions: the carboxylation of D-ribulose 1,5-bisphosphate, the primary event in carbon dioxide fixation, as well as the oxidative fragmentation of the pentose substrate. Both reactions occur simultaneously and in competition at the same active site. This chain is Ribulose bisphosphate carboxylase large chain, found in Acidiphilium cryptum (strain JF-5).